Reading from the N-terminus, the 365-residue chain is DNA polymerase IV 1 (365 aa).

In terms of domain architecture, UmuC spans 6–196; that stretch reads VLHIDMDYFF…LNVSKLWGIG (191 aa). Residues aspartate 10 and aspartate 113 each coordinate Mg(2+). Glutamate 114 is an active-site residue.

Belongs to the DNA polymerase type-Y family. As to quaternary structure, monomer. Mg(2+) is required as a cofactor.

Its subcellular location is the cytoplasm. It catalyses the reaction DNA(n) + a 2'-deoxyribonucleoside 5'-triphosphate = DNA(n+1) + diphosphate. In terms of biological role, poorly processive, error-prone DNA polymerase involved in untargeted mutagenesis. Copies undamaged DNA at stalled replication forks, which arise in vivo from mismatched or misaligned primer ends. These misaligned primers can be extended by PolIV. Exhibits no 3'-5' exonuclease (proofreading) activity. May be involved in translesional synthesis. In Methanosarcina mazei (strain ATCC BAA-159 / DSM 3647 / Goe1 / Go1 / JCM 11833 / OCM 88) (Methanosarcina frisia), this protein is DNA polymerase IV 1 (dbh1).